A 198-amino-acid chain; its full sequence is Elongation factor Ts (198 aa).

An involved in Mg(2+) ion dislocation from EF-Tu region spans residues 82-85 (TDFV).

The protein belongs to the EF-Ts family.

The protein localises to the cytoplasm. Functionally, associates with the EF-Tu.GDP complex and induces the exchange of GDP to GTP. It remains bound to the aminoacyl-tRNA.EF-Tu.GTP complex up to the GTP hydrolysis stage on the ribosome. The sequence is that of Elongation factor Ts from Oleidesulfovibrio alaskensis (strain ATCC BAA-1058 / DSM 17464 / G20) (Desulfovibrio alaskensis).